A 347-amino-acid chain; its full sequence is MSVMFDPEAAIYPFPPKPLPLNLDEKQFYREKIKRMLKERDAVMVAHYYTDPEIQQLAEETGGCISDSLEMARFGAKHSASTLLVAGVRFMGETAKILSPEKTILMPTLNAECSLDLGCPIEEFSAFCDAHPDRTVVVYANTSAAVKARADWVVTSSIAVELIEHLDSLGQKIIWAPDKHLGNYVQKQTGADVLCWQGACIVHDEFKTQALVRMKALYPEAAILVHPESPQSIVDMADAVGSTSQLINAAKTLPQQKLIVATDRGIFYKMQQAVPEKELFEAPTAGEGATCRSCAHCPWMAMNGLKAIADGLESGGAAHEIHVDAALREGALLPLNRMLEFAATLRS.

2 residues coordinate iminosuccinate: histidine 47 and serine 68. [4Fe-4S] cluster is bound at residue cysteine 113. Residues 139–141 (YAN) and serine 156 each bind iminosuccinate. Position 200 (cysteine 200) interacts with [4Fe-4S] cluster. Iminosuccinate contacts are provided by residues 226–228 (HPE) and threonine 243. Cysteine 297 serves as a coordination point for [4Fe-4S] cluster.

The protein belongs to the quinolinate synthase family. Type 1 subfamily. It depends on [4Fe-4S] cluster as a cofactor.

It is found in the cytoplasm. It carries out the reaction iminosuccinate + dihydroxyacetone phosphate = quinolinate + phosphate + 2 H2O + H(+). The protein operates within cofactor biosynthesis; NAD(+) biosynthesis; quinolinate from iminoaspartate: step 1/1. Catalyzes the condensation of iminoaspartate with dihydroxyacetone phosphate to form quinolinate. The chain is Quinolinate synthase from Enterobacter sp. (strain 638).